The primary structure comprises 364 residues: DNA polymerase IV (364 aa).

One can recognise a UmuC domain in the interval 6–186; sequence IIHIDMDAFY…LPIESFWGVG (181 aa). Residues D10 and D104 each contribute to the Mg(2+) site. E105 is an active-site residue.

This sequence belongs to the DNA polymerase type-Y family. As to quaternary structure, monomer. Mg(2+) is required as a cofactor.

Its subcellular location is the cytoplasm. The enzyme catalyses DNA(n) + a 2'-deoxyribonucleoside 5'-triphosphate = DNA(n+1) + diphosphate. Functionally, poorly processive, error-prone DNA polymerase involved in untargeted mutagenesis. Copies undamaged DNA at stalled replication forks, which arise in vivo from mismatched or misaligned primer ends. These misaligned primers can be extended by PolIV. Exhibits no 3'-5' exonuclease (proofreading) activity. May be involved in translesional synthesis, in conjunction with the beta clamp from PolIII. This chain is DNA polymerase IV, found in Bacteroides fragilis (strain YCH46).